A 419-amino-acid chain; its full sequence is AT-hook motif nuclear-localized protein 4 (419 aa).

Disordered stretches follow at residues 1 to 168 (MEER…SGGG), 301 to 337 (QQQQ…DPKA), and 382 to 419 (DLFS…EVPS). The short motif at 78-86 (KKKRGRPRK) is the Bipartite nuclear localization signal element. Residues 78–90 (KKKRGRPRKYNPD) constitute a DNA-binding region (a.T hook). The span at 101–112 (PISSSVPLTSEF) shows a compositional bias: polar residues. The segment covering 115–130 (RKRGRGRGRGRGRGRG) has biased composition (basic residues). A compositionally biased stretch (low complexity) spans 136–148 (GSREPNNNNNDNN). Residues 174–314 (VSPSFTPHVL…QQIKKQRRER (141 aa)) form the PPC domain. Residues 318–328 (PTTTQASNISF) are compositionally biased toward polar residues. The segment covering 391–406 (DREEDEDDLEGEDDEE) has biased composition (acidic residues).

In terms of assembly, homodimer. Interacts with AHL3. Predominantly expressed in the stele of the root meristem with a specificity to the procambium.

It is found in the nucleus. Functionally, transcription factor that specifically binds AT-rich DNA sequences related to the nuclear matrix attachment regions (MARs). Acts redundantly with AHL3 to regulate the formation of tissue boundary between the xylem and procambium in the root meristem. Cell-to-cell movement of AHL4 from the procambium to the xylem is critical for its function in root vascular patterning. The chain is AT-hook motif nuclear-localized protein 4 from Arabidopsis thaliana (Mouse-ear cress).